The sequence spans 145 residues: uncharacterized protein (145 aa).

2 disordered regions span residues 1–41 and 122–145; these read MRRL…PPGT and RLPS…PLAL. Polar residues predominate over residues 20–34; sequence GGPQNGTSGCTTAPQ. Basic and acidic residues predominate over residues 134–145; the sequence is DSQHPREVPLAL.

In terms of tissue distribution, ubiquitous.

This is an uncharacterized protein from Homo sapiens (Human).